We begin with the raw amino-acid sequence, 214 residues long: Putative glucose-6-phosphate isomerase 1 (214 aa).

Positions 92, 94, 101, and 140 each coordinate Fe cation.

Belongs to the archaeal-type GPI family. As to quaternary structure, homodimer. Fe cation serves as cofactor.

It localises to the cytoplasm. It carries out the reaction alpha-D-glucose 6-phosphate = beta-D-fructose 6-phosphate. Its pathway is carbohydrate degradation; glycolysis; D-glyceraldehyde 3-phosphate and glycerone phosphate from D-glucose: step 2/4. This Rhizobium meliloti (strain 1021) (Ensifer meliloti) protein is Putative glucose-6-phosphate isomerase 1 (pgiA1).